The following is a 210-amino-acid chain: ATP-dependent Clp protease proteolytic subunit (210 aa).

The active-site Nucleophile is the Ser-106. His-131 is a catalytic residue.

The protein belongs to the peptidase S14 family. Fourteen ClpP subunits assemble into 2 heptameric rings which stack back to back to give a disk-like structure with a central cavity, resembling the structure of eukaryotic proteasomes.

It is found in the cytoplasm. The catalysed reaction is Hydrolysis of proteins to small peptides in the presence of ATP and magnesium. alpha-casein is the usual test substrate. In the absence of ATP, only oligopeptides shorter than five residues are hydrolyzed (such as succinyl-Leu-Tyr-|-NHMec, and Leu-Tyr-Leu-|-Tyr-Trp, in which cleavage of the -Tyr-|-Leu- and -Tyr-|-Trp bonds also occurs).. In terms of biological role, cleaves peptides in various proteins in a process that requires ATP hydrolysis. Has a chymotrypsin-like activity. Plays a major role in the degradation of misfolded proteins. The protein is ATP-dependent Clp protease proteolytic subunit of Bartonella quintana (strain Toulouse) (Rochalimaea quintana).